The following is a 250-amino-acid chain: Bcl-2-like protein 12 (250 aa).

Positions 24 to 46 (GEAAGSPVPTPPRSPAQEEPTDF) are disordered. The residue at position 29 (serine 29) is a Phosphoserine. Threonine 33 is subject to Phosphothreonine. Serine 37 is subject to Phosphoserine. The residue at position 60 (arginine 60) is an Omega-N-methylarginine. Phosphoserine is present on residues serine 111, serine 158, serine 159, serine 161, and serine 189. The short motif at 227-238 (WIQAHGGWEGIL) is the BH2 element.

The protein belongs to the Bcl-2 family. Expressed mainly in breast, thymus, prostate, fetal liver, colon, placenta, pancreas, small intestine, spinal cord, kidney, and bone marrow and to a lesser extent in many other tissues. Isoform 2 is primarily expressed in skeletal muscle.

The sequence is that of Bcl-2-like protein 12 from Homo sapiens (Human).